The chain runs to 457 residues: Acetylcholine receptor subunit alpha-1-B (457 aa).

Positions 1-20 (MDYTASCLIFLFIAAGTVFG) are cleaved as a signal peptide. At 21 to 230 (TDHETRLIGD…ITYHFVLQRL (210 aa)) the chain is on the extracellular side. Cystine bridges form between cysteine 148–cysteine 162 and cysteine 212–cysteine 213. The N-linked (GlcNAc...) asparagine glycan is linked to asparagine 161. 3 consecutive transmembrane segments (helical) span residues 231-255 (PLYF…VFYL), 263-281 (MTLS…LVIV), and 297-316 (YMLF…VIVI). Topologically, residues 317-428 (NTHHRSPSTH…WKFVAMVLDH (112 aa)) are cytoplasmic. The helical transmembrane segment at 429–447 (ILLAVFMTVCVIGTLAVFA) threads the bilayer.

The protein belongs to the ligand-gated ion channel (TC 1.A.9) family. Acetylcholine receptor (TC 1.A.9.1) subfamily. Alpha-1/CHRNA1 sub-subfamily. In terms of assembly, one of the alpha chains that assemble within the acetylcholine receptor, a pentamer of two alpha chains, a beta, a delta, and a gamma or epsilon chains.

The protein localises to the postsynaptic cell membrane. It is found in the cell membrane. It carries out the reaction K(+)(in) = K(+)(out). The catalysed reaction is Na(+)(in) = Na(+)(out). In terms of biological role, upon acetylcholine binding, the AChR responds by an extensive change in conformation that affects all subunits and leads to opening of an ion-conducting channel across the plasma membrane. In Xenopus laevis (African clawed frog), this protein is Acetylcholine receptor subunit alpha-1-B (chrna1-b).